The sequence spans 384 residues: Na(+)/H(+) antiporter NhaA (384 aa).

11 consecutive transmembrane segments (helical) span residues 9 to 29 (NLETIGGILLFIAAVLAIIIA), 58 to 78 (LLLWINDGLMAIYFLLIGLEI), 94 to 114 (LVPALTALAGLLFPALIFIFF), 124 to 144 (GWAIPTATDIAFTLGIVSLLG), 153 to 173 (ILLTAIAIFDDIAAIVIIALF), 179 to 199 (SLLSLSLALVFTLILIGLNYF), 204 to 224 (ISVFMLFGVALWIAVLKSGVH), 256 to 276 (VVFLILPLFAFANAGVSFVGL), 285 to 305 (VVLGIGLGLFLGKQLGIFLSL), 325 to 345 (VYGIALICGVGFTMSLFIGSL), and 357 to 377 (MVKIGVVFGSFIAGLTGFLVL).

The protein belongs to the NhaA Na(+)/H(+) (TC 2.A.33) antiporter family.

The protein resides in the cell inner membrane. The catalysed reaction is Na(+)(in) + 2 H(+)(out) = Na(+)(out) + 2 H(+)(in). Its function is as follows. Na(+)/H(+) antiporter that extrudes sodium in exchange for external protons. This is Na(+)/H(+) antiporter NhaA from Legionella pneumophila (strain Lens).